The primary structure comprises 293 residues: ATP synthase subunit gamma, mitochondrial (293 aa).

The transit peptide at 1 to 21 (MFALRTAARPAARSVGATRNY) directs the protein to the mitochondrion.

In terms of assembly, F-type ATP synthases have 2 components, the catalytic core F(1) and the membrane-embedded component F(0), linked together by a central stalk and a peripheral stalk. The central stalk, also called rotor shaft, is often seen as part of F(1). The peripheral stalk is seen as part of F(0). F(0) contains the membrane channel next to the rotor. F-type ATP synthases form dimers but each monomer functions independently in ATP generation. The dimer consists of 17 different polypeptides: ATP1 (subunit alpha, 3 molecules per monomer, part of F(1)), ATP2 (subunit beta, 3 copies per monomer, part of F(1)), ATP3 (subunit gamma, part of the central stalk), ATP4 (subunit b, part of the peripheral stalk), ATP5/OSCP (subunit 5/OSCP, part of the peripheral stalk), ATP6 (subunit a, part of the peripheral stalk), ATP7 (subunit d, part of the peripheral stalk), ATP8 (subunit 8, part of the peripheral stalk), OLI1 (subunit c, part of the rotor, 10 molecules per monomer), ATP14 (subunit h, part of the peripheral stalk), ATP15 (subunit epsilon, part of the central stalk), ATP16 (subunit delta, part of the central stalk), ATP17 (subunit f, part of the peripheral stalk), ATP18 (subunit i/j, part of the peripheral stalk), ATP19 (subunit k, dimer-specific, at interface between monomers), ATP20 (subunit g, at interface between monomers), TIM11 (subunit e, at interface between monomers).

It localises to the mitochondrion inner membrane. Its function is as follows. Mitochondrial membrane ATP synthase (F(1)F(0) ATP synthase or Complex V) produces ATP from ADP in the presence of a proton gradient across the membrane which is generated by electron transport complexes of the respiratory chain. F-type ATP synthases consist of two structural domains, F(1) - containing the extramembraneous catalytic core, and F(0) - containing the membrane proton channel, linked together by a central stalk and a peripheral stalk. During catalysis, ATP synthesis in the catalytic domain of F(1) is coupled via a rotary mechanism of the central stalk subunits to proton translocation. Part of the complex F(1) domain and the central stalk which is part of the complex rotary element. The gamma/ATP3 subunit protrudes into the catalytic domain formed of alpha/ATP1(3)beta/ATP2(3). Rotation of the central stalk against the surrounding alpha/ATP1(3)beta/ATP2(3) subunits leads to hydrolysis of ATP in three separate catalytic sites on the beta/ATP2 subunits. The sequence is that of ATP synthase subunit gamma, mitochondrial from Yarrowia lipolytica (strain CLIB 122 / E 150) (Yeast).